Here is a 239-residue protein sequence, read N- to C-terminus: ATP-dependent dethiobiotin synthetase BioD (239 aa).

Position 15–20 (15–20 (EIGKTF)) interacts with ATP. Residue Thr-19 participates in Mg(2+) binding. Lys-40 is an active-site residue. Residues Asp-57, 118-121 (EGVG), and 178-179 (NH) each bind ATP. Asp-57 and Glu-118 together coordinate Mg(2+).

This sequence belongs to the dethiobiotin synthetase family. As to quaternary structure, homodimer. Mg(2+) serves as cofactor.

The protein localises to the cytoplasm. It catalyses the reaction (7R,8S)-7,8-diammoniononanoate + CO2 + ATP = (4R,5S)-dethiobiotin + ADP + phosphate + 3 H(+). It functions in the pathway cofactor biosynthesis; biotin biosynthesis; biotin from 7,8-diaminononanoate: step 1/2. Catalyzes a mechanistically unusual reaction, the ATP-dependent insertion of CO2 between the N7 and N8 nitrogen atoms of 7,8-diaminopelargonic acid (DAPA, also called 7,8-diammoniononanoate) to form a ureido ring. The chain is ATP-dependent dethiobiotin synthetase BioD from Burkholderia cenocepacia (strain ATCC BAA-245 / DSM 16553 / LMG 16656 / NCTC 13227 / J2315 / CF5610) (Burkholderia cepacia (strain J2315)).